Reading from the N-terminus, the 663-residue chain is Dual specificity protein phosphatase 8 (663 aa).

The 116-residue stretch at Gly23 to Glu138 folds into the Rhodanese domain. One can recognise a Tyrosine-protein phosphatase domain in the interval Gly160–Leu302. Cys246 functions as the Phosphocysteine intermediate in the catalytic mechanism. Disordered regions lie at residues Leu313–Pro367 and Tyr404–Arg624. Composition is skewed to low complexity over residues Ser334 to Ser353, Leu427 to Val448, and Ser546 to Ser557. Residues Ser558–Ser577 show a composition bias toward gly residues. Over residues Ser578–Ser600 the composition is skewed to low complexity.

It belongs to the protein-tyrosine phosphatase family. Non-receptor class dual specificity subfamily. Monomer. Expressed predominantly in brain and lung.

The protein localises to the cytoplasm. Its subcellular location is the nucleus. The enzyme catalyses O-phospho-L-tyrosyl-[protein] + H2O = L-tyrosyl-[protein] + phosphate. It carries out the reaction O-phospho-L-seryl-[protein] + H2O = L-seryl-[protein] + phosphate. It catalyses the reaction O-phospho-L-threonyl-[protein] + H2O = L-threonyl-[protein] + phosphate. Functionally, has phosphatase activity with synthetic phosphatase substrates and negatively regulates mitogen-activated protein kinase activity, presumably by catalysing their dephosphorylation. Expected to display protein phosphatase activity toward phosphotyrosine, phosphoserine and phosphothreonine residues. This chain is Dual specificity protein phosphatase 8 (Dusp8), found in Mus musculus (Mouse).